A 475-amino-acid polypeptide reads, in one-letter code: uncharacterized protein (475 aa).

This is an uncharacterized protein from Schizosaccharomyces pombe (strain 972 / ATCC 24843) (Fission yeast).